The primary structure comprises 275 residues: Large ribosomal subunit protein uL2 (275 aa).

Disordered regions lie at residues 36–55 (PKKR…RHKG) and 223–275 (VVMN…RHAR).

It belongs to the universal ribosomal protein uL2 family. In terms of assembly, part of the 50S ribosomal subunit. Forms a bridge to the 30S subunit in the 70S ribosome.

One of the primary rRNA binding proteins. Required for association of the 30S and 50S subunits to form the 70S ribosome, for tRNA binding and peptide bond formation. It has been suggested to have peptidyltransferase activity; this is somewhat controversial. Makes several contacts with the 16S rRNA in the 70S ribosome. The sequence is that of Large ribosomal subunit protein uL2 from Thiobacillus denitrificans (strain ATCC 25259 / T1).